Here is a 386-residue protein sequence, read N- to C-terminus: Galactokinase (386 aa).

Residue 35–38 (EHTD) coordinates substrate. 125-131 (GAGLSSS) contacts ATP. Mg(2+) is bound by residues Ser131 and Glu163. Residue Asp175 is the Proton acceptor of the active site. Substrate is bound at residue Tyr224.

This sequence belongs to the GHMP kinase family. GalK subfamily.

The protein localises to the cytoplasm. It catalyses the reaction alpha-D-galactose + ATP = alpha-D-galactose 1-phosphate + ADP + H(+). It participates in carbohydrate metabolism; galactose metabolism. Catalyzes the transfer of the gamma-phosphate of ATP to D-galactose to form alpha-D-galactose-1-phosphate (Gal-1-P). This is Galactokinase from Vibrio cholerae serotype O1 (strain ATCC 39315 / El Tor Inaba N16961).